The sequence spans 208 residues: RNA chaperone ProQ (208 aa).

A compositionally biased stretch (basic and acidic residues) spans 106–127; it reads SKAKVATRRKEQAKKAREEAKA. A disordered region spans residues 106–154; sequence SKAKVATRRKEQAKKAREEAKAKKTARAATPPKRRPQPAAKKVEQPVET.

This sequence belongs to the ProQ family.

It localises to the cytoplasm. Its function is as follows. RNA chaperone with significant RNA binding, RNA strand exchange and RNA duplexing activities. The sequence is that of RNA chaperone ProQ from Aliivibrio fischeri (strain ATCC 700601 / ES114) (Vibrio fischeri).